The following is a 74-amino-acid chain: Small ribosomal subunit protein bS18 (74 aa).

It belongs to the bacterial ribosomal protein bS18 family. As to quaternary structure, part of the 30S ribosomal subunit. Forms a tight heterodimer with protein bS6.

Binds as a heterodimer with protein bS6 to the central domain of the 16S rRNA, where it helps stabilize the platform of the 30S subunit. The chain is Small ribosomal subunit protein bS18 from Natranaerobius thermophilus (strain ATCC BAA-1301 / DSM 18059 / JW/NM-WN-LF).